The following is a 204-amino-acid chain: LexA repressor (204 aa).

The H-T-H motif DNA-binding region spans 31–51 (VREICAKVGLSSTSTVHGHLS). Residues S128 and K165 each act as for autocatalytic cleavage activity in the active site.

Belongs to the peptidase S24 family. As to quaternary structure, homodimer.

It catalyses the reaction Hydrolysis of Ala-|-Gly bond in repressor LexA.. In terms of biological role, represses a number of genes involved in the response to DNA damage (SOS response), including recA and lexA. In the presence of single-stranded DNA, RecA interacts with LexA causing an autocatalytic cleavage which disrupts the DNA-binding part of LexA, leading to derepression of the SOS regulon and eventually DNA repair. The sequence is that of LexA repressor from Clostridium acetobutylicum (strain ATCC 824 / DSM 792 / JCM 1419 / IAM 19013 / LMG 5710 / NBRC 13948 / NRRL B-527 / VKM B-1787 / 2291 / W).